Consider the following 62-residue polypeptide: U-stichotoxin-Hau1a (62 aa).

The first 21 residues, 1-21, serve as a signal peptide directing secretion; sequence MKPAIFLMLFVAMFLISEGEG. Residues 22 to 31 constitute a propeptide that is removed on maturation; the sequence is FKPKDAPQER. Pro-36 carries the hydroxyproline modification. Disulfide bonds link Cys-41–Cys-53 and Cys-44–Cys-59.

It belongs to the Hau1a/HC18/HC19 family.

The protein localises to the secreted. The protein resides in the nematocyst. Functionally, toxin that is lethal to crab. Does not produce the typical symptoms associated with sodium channel toxins in crabs, suggesting that it likely does not act on sodium channels. This is U-stichotoxin-Hau1a from Heteractis aurora (Banded sea anemone).